The primary structure comprises 882 residues: MRTAEIREKFLSFFEGKGHLRLPSFSLIPEDDPSLLFTSAGMAPLKPYFLGAKPIFGGREWRRVTTCQECLRVGDIENVGRTSRHNTYFEMLGNFSFGDYFKKEAILWAWEFLTEHLKLDPGRLWVTVFEDDDEAYEIWRDLVGVPEERIGRFGEDENYWPGGAITHGPNGPSGPCSEIFYDRGPAYGTPDETGPNTGSGDRFVEIWNLVFTQYDRQGPIPGPGILKPLPQKNIDTGMGLYRVAAILQDVEDFYRTDTFFPIIQEVARMSGRPYEGKTSVSHRVIADHVRAVVAALSDGATFSNTGRGYVIRRLLRRALRHGYLLGLSDPFLHRLAPLVAELLGDFYPEMRENLPAVEKQIRLEEERFLETLEGGLKRLDALLSGLKPGEVLPGKEAFRLYDTYGFPLDLTVEIAAERGYGVDTEGFQKAMEEQQSRSRAAMAFEREIFKKGAQVLEELYAERGATEFLGYNALEAEAEVLALLAGDQSLLEAGPGTEVQVVLDKTPFYAEGGGQIGDFGLLEWPGGRARVETTRKTERGIFLHKARVEEGVLRVGERVRAVVDPRRRDTERNHTATHLLHAALRAVLGPHVRQAGSLVAPDRLRFDFTHPEPLKPEELERVELLVNRWIMADFPVTWRYMPLEEARKEGAMALFGEKYGEVVRVVRVEGSPLEGLESKELCGGCHVRRTGEIGAFLIRSEEAVSAGVRRIEAVTGEEAIRFARGSLNRLKALAERLEVGEAALEERLEKLLAELKEKEREVESLKARLVQAALGGGGGASLEEKGGLRWTVAELPGLDAKALRQAADDLVARGADVALVLSGGQAVLKLSPKAQGMGLEAGALFRALAEKAGGRGGGKGALAQGGGLDPRKAREALPGLLP.

Zn(2+) contacts are provided by histidine 574, histidine 578, cysteine 682, and histidine 686. A disordered region spans residues 853–882 (GGRGGGKGALAQGGGLDPRKAREALPGLLP). The segment covering 854–868 (GRGGGKGALAQGGGL) has biased composition (gly residues).

Belongs to the class-II aminoacyl-tRNA synthetase family. Zn(2+) is required as a cofactor.

It is found in the cytoplasm. It catalyses the reaction tRNA(Ala) + L-alanine + ATP = L-alanyl-tRNA(Ala) + AMP + diphosphate. Its function is as follows. Catalyzes the attachment of alanine to tRNA(Ala) in a two-step reaction: alanine is first activated by ATP to form Ala-AMP and then transferred to the acceptor end of tRNA(Ala). Also edits incorrectly charged Ser-tRNA(Ala) and Gly-tRNA(Ala) via its editing domain. The protein is Alanine--tRNA ligase of Thermus thermophilus (strain ATCC 27634 / DSM 579 / HB8).